A 210-amino-acid chain; its full sequence is Small ribosomal subunit protein uS4 (210 aa).

Residues 30–49 (EKSSLEKRKYPPGLPPKKKG) are disordered. Residues 99–162 (RRLDNVLYRM…QKSAFIEENI (64 aa)) enclose the S4 RNA-binding domain.

This sequence belongs to the universal ribosomal protein uS4 family. In terms of assembly, part of the 30S ribosomal subunit. Contacts protein S5. The interaction surface between S4 and S5 is involved in control of translational fidelity.

In terms of biological role, one of the primary rRNA binding proteins, it binds directly to 16S rRNA where it nucleates assembly of the body of the 30S subunit. Functionally, with S5 and S12 plays an important role in translational accuracy. In Leptospira biflexa serovar Patoc (strain Patoc 1 / Ames), this protein is Small ribosomal subunit protein uS4.